Reading from the N-terminus, the 95-residue chain is Aspartyl/glutamyl-tRNA(Asn/Gln) amidotransferase subunit C (95 aa).

Belongs to the GatC family. As to quaternary structure, heterotrimer of A, B and C subunits.

It carries out the reaction L-glutamyl-tRNA(Gln) + L-glutamine + ATP + H2O = L-glutaminyl-tRNA(Gln) + L-glutamate + ADP + phosphate + H(+). The catalysed reaction is L-aspartyl-tRNA(Asn) + L-glutamine + ATP + H2O = L-asparaginyl-tRNA(Asn) + L-glutamate + ADP + phosphate + 2 H(+). In terms of biological role, allows the formation of correctly charged Asn-tRNA(Asn) or Gln-tRNA(Gln) through the transamidation of misacylated Asp-tRNA(Asn) or Glu-tRNA(Gln) in organisms which lack either or both of asparaginyl-tRNA or glutaminyl-tRNA synthetases. The reaction takes place in the presence of glutamine and ATP through an activated phospho-Asp-tRNA(Asn) or phospho-Glu-tRNA(Gln). The sequence is that of Aspartyl/glutamyl-tRNA(Asn/Gln) amidotransferase subunit C from Desulfosudis oleivorans (strain DSM 6200 / JCM 39069 / Hxd3) (Desulfococcus oleovorans).